The chain runs to 184 residues: ATP synthase subunit delta (184 aa).

The protein belongs to the ATPase delta chain family. In terms of assembly, F-type ATPases have 2 components, F(1) - the catalytic core - and F(0) - the membrane proton channel. F(1) has five subunits: alpha(3), beta(3), gamma(1), delta(1), epsilon(1). CF(0) has four main subunits: a(1), b(1), b'(1) and c(10-14). The alpha and beta chains form an alternating ring which encloses part of the gamma chain. F(1) is attached to F(0) by a central stalk formed by the gamma and epsilon chains, while a peripheral stalk is formed by the delta, b and b' chains.

The protein localises to the cellular thylakoid membrane. Functionally, f(1)F(0) ATP synthase produces ATP from ADP in the presence of a proton or sodium gradient. F-type ATPases consist of two structural domains, F(1) containing the extramembraneous catalytic core and F(0) containing the membrane proton channel, linked together by a central stalk and a peripheral stalk. During catalysis, ATP synthesis in the catalytic domain of F(1) is coupled via a rotary mechanism of the central stalk subunits to proton translocation. In terms of biological role, this protein is part of the stalk that links CF(0) to CF(1). It either transmits conformational changes from CF(0) to CF(1) or is implicated in proton conduction. This is ATP synthase subunit delta from Nostoc punctiforme (strain ATCC 29133 / PCC 73102).